We begin with the raw amino-acid sequence, 251 residues long: Insulin-induced gene 1 protein (251 aa).

Topologically, residues 1 to 58 (MQTLEEHCWSCSCTRGRDKKGTRLSTWLAQRAAKAMSSLNSLLSLAYHTLASSEGRSL) are cytoplasmic. A helical membrane pass occupies residues 59–81 (IRRSLVLFAVGVFLALVLNLLQI). Over 82 to 100 (QRNVTLFPEEVIATIFSSA) the chain is Extracellular. Residues 101-118 (WWVPPCCGTAAAVVGLLY) form a helical membrane-spanning segment. The Cytoplasmic portion of the chain corresponds to 119 to 133 (PCIDSHLGEPHKFKR). Residues 134–156 (EWASVMRCIAVFVGINHASAKLD) form a helical membrane-spanning segment. The Extracellular segment spans residues 157-159 (FAN). The helical transmembrane segment at 160–178 (NVQLSLTLAALSLGLWWTF) threads the bilayer. Residues 179–183 (DRSRS) are Cytoplasmic-facing. A helical transmembrane segment spans residues 184-205 (GLGLGITIAFLATLITQFLVYN). Topologically, residues 206-219 (GVYQYTSPDFLYIR) are extracellular. A helical transmembrane segment spans residues 220–237 (SWLPCIFFSGGVTVGNIG). Topologically, residues 238 to 251 (RQLAMGSSEKTHSD) are cytoplasmic. Positions 245-251 (SEKTHSD) match the KxHxx motif.

It belongs to the INSIG family. As to quaternary structure, interacts with scap; interaction is direct and only takes place in the presence of sterols; it prevents interaction between scap and the coat protein complex II (COPII). Associates with the SCAP-SREBP complex; association is mediated via its interaction with scap and only takes place in the presence of sterols.

Its subcellular location is the endoplasmic reticulum membrane. Oxysterol-binding protein that mediates feedback control of cholesterol synthesis by controlling both endoplasmic reticulum to Golgi transport of scap and degradation of hmgcr. Acts as a negative regulator of cholesterol biosynthesis by mediating the retention of the SCAP-SREBP complex in the endoplasmic reticulum, thereby blocking the processing of sterol regulatory element-binding proteins (SREBPs). Binds oxysterol, including 25-hydroxycholesterol, regulating interaction with scap and retention of the SCAP-SREBP complex in the endoplasmic reticulum. In presence of oxysterol, interacts with scap, retaining the SCAP-SREBP complex in the endoplasmic reticulum, thereby preventing scap from escorting SREBPs to the Golgi. Sterol deprivation reduces oxysterol-binding, disrupting the interaction between insig1 and scap, thereby promoting Golgi transport of the SCAP-SREBP complex, followed by processing and nuclear translocation of SREBPs. Also regulates cholesterol synthesis by regulating degradation of hmgcr. The polypeptide is Insulin-induced gene 1 protein (Xenopus tropicalis (Western clawed frog)).